The sequence spans 263 residues: uncharacterized protein (263 aa).

31–38 (GPTGSGKT) lines the ATP pocket.

Belongs to the CbbQ/NirQ/NorQ/GpvN family.

This is an uncharacterized protein from Staphylococcus epidermidis (strain ATCC 12228 / FDA PCI 1200).